The primary structure comprises 178 residues: Ribulose bisphosphate carboxylase small subunit, chloroplastic (178 aa).

A chloroplast-targeting transit peptide spans 1–54 (MALISSAAVTTINRAPVQANLATPFTGLKSSAGFPVTKKNNDITSITSNGSRVN).

It belongs to the RuBisCO small chain family. In terms of assembly, heterohexadecamer of 8 large and 8 small subunits.

The protein localises to the plastid. It localises to the chloroplast. Its function is as follows. RuBisCO catalyzes two reactions: the carboxylation of D-ribulose 1,5-bisphosphate, the primary event in carbon dioxide fixation, as well as the oxidative fragmentation of the pentose substrate. Both reactions occur simultaneously and in competition at the same active site. Although the small subunit is not catalytic it is essential for maximal activity. The protein is Ribulose bisphosphate carboxylase small subunit, chloroplastic of Trifolium repens (Creeping white clover).